The following is a 440-amino-acid chain: Probable exopolygalacturonase C (440 aa).

The first 21 residues, 1–21 (MLITNPALLGILASLVPLALG), serve as a signal peptide directing secretion. Residues Asn-84 and Asn-151 are each glycosylated (N-linked (GlcNAc...) asparagine). 3 PbH1 repeats span residues 188–210 (GDDITVSHAIVDATSTGGFPFNT), 217–238 (GTNISITDSVMFNGDDAIAVNT), and 240–261 (SHNIVFARNTIGYQSHGMSIGS). Asn-219 carries N-linked (GlcNAc...) asparagine glycosylation. The Proton donor role is filled by Asp-231. Residue His-255 is part of the active site. Asn-271 carries N-linked (GlcNAc...) asparagine glycosylation. Residues 272-293 (ITNLRFEDVTVIDALYAARFKS) form a PbH1 4 repeat. An N-linked (GlcNAc...) asparagine glycan is attached at Asn-313. Cys-389 and Cys-395 are disulfide-bonded. Asn-434 carries N-linked (GlcNAc...) asparagine glycosylation.

It belongs to the glycosyl hydrolase 28 family.

The protein localises to the secreted. The catalysed reaction is [(1-&gt;4)-alpha-D-galacturonosyl](n) + H2O = alpha-D-galacturonate + [(1-&gt;4)-alpha-D-galacturonosyl](n-1). Its function is as follows. Specific in hydrolyzing the terminal glycosidic bond of polygalacturonic acid and oligogalacturonates. The protein is Probable exopolygalacturonase C (pgxC) of Aspergillus fumigatus (strain ATCC MYA-4609 / CBS 101355 / FGSC A1100 / Af293) (Neosartorya fumigata).